The primary structure comprises 446 residues: Glutamate-1-semialdehyde 2,1-aminomutase (446 aa).

N6-(pyridoxal phosphate)lysine is present on lysine 278.

The protein belongs to the class-III pyridoxal-phosphate-dependent aminotransferase family. HemL subfamily. Homodimer. The cofactor is pyridoxal 5'-phosphate.

The protein localises to the cytoplasm. It catalyses the reaction (S)-4-amino-5-oxopentanoate = 5-aminolevulinate. The protein operates within porphyrin-containing compound metabolism; protoporphyrin-IX biosynthesis; 5-aminolevulinate from L-glutamyl-tRNA(Glu): step 2/2. This Deinococcus geothermalis (strain DSM 11300 / CIP 105573 / AG-3a) protein is Glutamate-1-semialdehyde 2,1-aminomutase.